A 338-amino-acid polypeptide reads, in one-letter code: Tetraacyldisaccharide 4'-kinase (338 aa).

66 to 73 (IAGGAGKT) contacts ATP.

This sequence belongs to the LpxK family.

It catalyses the reaction a lipid A disaccharide + ATP = a lipid IVA + ADP + H(+). The protein operates within glycolipid biosynthesis; lipid IV(A) biosynthesis; lipid IV(A) from (3R)-3-hydroxytetradecanoyl-[acyl-carrier-protein] and UDP-N-acetyl-alpha-D-glucosamine: step 6/6. Functionally, transfers the gamma-phosphate of ATP to the 4'-position of a tetraacyldisaccharide 1-phosphate intermediate (termed DS-1-P) to form tetraacyldisaccharide 1,4'-bis-phosphate (lipid IVA). This Delftia acidovorans (strain DSM 14801 / SPH-1) protein is Tetraacyldisaccharide 4'-kinase.